The following is a 191-amino-acid chain: Protein phosphatase inhibitor 2 (191 aa).

A compositionally biased stretch (basic and acidic residues) spans 20 to 31; the sequence is ESNKPVRQKITE. Disordered stretches follow at residues 20–52 and 67–191; these read ESNKPVRQKITEPKTPYHPMMDDDGSLSPRGRA and RNVL…PELI. Phosphoserine occurs at positions 45 and 47. A compositionally biased stretch (acidic residues) spans 93–109; sequence SDEEEEEADPMDQDEEG. A compositionally biased stretch (basic and acidic residues) spans 114 to 136; it reads KNERFNAHRKAHYDEFRKVKELR.

Interacts with protein phosphatase 1. Interacts with TOPP1, SRK2D/SNRK2.2, SRK2I/SNRK2.3, SRK2E/SNRK2.6, SRK2C/SNRK2.8 and PYL11. In terms of processing, phosphorylated in vivo. In terms of tissue distribution, expressed in roots, cotyledons, leaves, flowers and siliques.

The protein resides in the nucleus. Its subcellular location is the cytoplasm. Its function is as follows. Inhibitor of protein-phosphatase 1 (PP1). Binds to and inhibits PP1 activity. Acts as negative regulator of abscisic acid (ABA) signaling. Enhances the inhibition of SRK2E/SNRK2.6 by TOPP1. May promote the interaction between TOPP1 and the ABA receptor PYL11. In Arabidopsis thaliana (Mouse-ear cress), this protein is Protein phosphatase inhibitor 2.